The sequence spans 81 residues: Conotoxin ArMKLT2-0311 (81 aa).

A signal peptide spans 1–22 (MKLTCVLIVALLFLTACQLTTA). The span at 23–34 (DDSRDKQEDPLV) shows a compositional bias: basic and acidic residues. The segment at 23-45 (DDSRDKQEDPLVRSHRKMQKSED) is disordered. Positions 23–51 (DDSRDKQEDPLVRSHRKMQKSEDPKMAER) are excised as a propeptide. Cystine bridges form between Cys52-Cys67, Cys59-Cys71, and Cys66-Cys80.

It belongs to the conotoxin O1 superfamily. Expressed by the venom duct.

The protein localises to the secreted. This chain is Conotoxin ArMKLT2-0311, found in Conus arenatus (Sand-dusted cone).